A 264-amino-acid polypeptide reads, in one-letter code: S-adenosylmethionine decarboxylase proenzyme (264 aa).

Catalysis depends on Ser-113, which acts as the Schiff-base intermediate with substrate; via pyruvic acid. Residue Ser-113 is modified to Pyruvic acid (Ser); by autocatalysis. His-118 (proton acceptor; for processing activity) is an active-site residue. Cys-141 (proton donor; for catalytic activity) is an active-site residue.

It belongs to the prokaryotic AdoMetDC family. Type 2 subfamily. Heterooctamer of four alpha and four beta chains arranged as a tetramer of alpha/beta heterodimers. The cofactor is pyruvate. In terms of processing, is synthesized initially as an inactive proenzyme. Formation of the active enzyme involves a self-maturation process in which the active site pyruvoyl group is generated from an internal serine residue via an autocatalytic post-translational modification. Two non-identical subunits are generated from the proenzyme in this reaction, and the pyruvate is formed at the N-terminus of the alpha chain, which is derived from the carboxyl end of the proenzyme. The post-translation cleavage follows an unusual pathway, termed non-hydrolytic serinolysis, in which the side chain hydroxyl group of the serine supplies its oxygen atom to form the C-terminus of the beta chain, while the remainder of the serine residue undergoes an oxidative deamination to produce ammonia and the pyruvoyl group blocking the N-terminus of the alpha chain.

The enzyme catalyses S-adenosyl-L-methionine + H(+) = S-adenosyl 3-(methylsulfanyl)propylamine + CO2. It functions in the pathway amine and polyamine biosynthesis; S-adenosylmethioninamine biosynthesis; S-adenosylmethioninamine from S-adenosyl-L-methionine: step 1/1. Functionally, catalyzes the decarboxylation of S-adenosylmethionine to S-adenosylmethioninamine (dcAdoMet), the propylamine donor required for the synthesis of the polyamines spermine and spermidine from the diamine putrescine. The protein is S-adenosylmethionine decarboxylase proenzyme of Pseudomonas syringae pv. tomato (strain ATCC BAA-871 / DC3000).